Reading from the N-terminus, the 145-residue chain is Putative BCoR-like protein 2 (145 aa).

Basic and acidic residues predominate over residues 1–27 (MKEKLSKKRAEVKGNRSWLEEFLKPSD). The tract at residues 1–58 (MKEKLSKKRAEVKGNRSWLEEFLKPSDNEEGPPPKNKVLSNNASSQKPTHSSCIPLLR) is disordered. Residues 38–52 (VLSNNASSQKPTHSS) are compositionally biased toward polar residues.

It belongs to the BCOR family.

The protein is Putative BCoR-like protein 2 (BCORP1) of Homo sapiens (Human).